Consider the following 144-residue polypeptide: Heme transporter hrg1-B (144 aa).

Transmembrane regions (helical) follow at residues 6 to 26 (IYIS…AFIV), 38 to 58 (AMGG…IMYI), 71 to 91 (FFMF…ATFI), and 107 to 127 (FYLS…LGLY). The short motif at 140–141 (IL) is the Di-leucine motif element.

It belongs to the HRG family.

It is found in the endosome membrane. It localises to the lysosome membrane. The protein localises to the cytoplasmic vesicle. The protein resides in the phagosome membrane. The enzyme catalyses heme b(in) = heme b(out). Functionally, heme transporter that regulates intracellular heme availability through the endosomal or lysosomal compartment. In macrophages, is the heme transporter for heme-iron recycling. Essential for macrophage iron homeostasis, transports heme from the phagolysosome to the cytoplasm during erythrophagocytosis (EP). The chain is Heme transporter hrg1-B (slc48a1a) from Danio rerio (Zebrafish).